A 404-amino-acid polypeptide reads, in one-letter code: S-adenosylmethionine synthase (404 aa).

ATP is bound at residue His18. Mg(2+) is bound at residue Asp20. Residue Glu46 coordinates K(+). Residues Glu59 and Gln102 each coordinate L-methionine. A flexible loop region spans residues 102-112; it reads QSPEIAQGVDH. ATP is bound by residues 178-180, 249-250, Asp258, 264-265, Ala281, and Lys285; these read DGK, KF, and RK. Asp258 lines the L-methionine pocket. Lys289 contacts L-methionine.

Belongs to the AdoMet synthase family. In terms of assembly, homotetramer; dimer of dimers. Mg(2+) is required as a cofactor. The cofactor is K(+).

It is found in the cytoplasm. It carries out the reaction L-methionine + ATP + H2O = S-adenosyl-L-methionine + phosphate + diphosphate. Its pathway is amino-acid biosynthesis; S-adenosyl-L-methionine biosynthesis; S-adenosyl-L-methionine from L-methionine: step 1/1. Catalyzes the formation of S-adenosylmethionine (AdoMet) from methionine and ATP. The overall synthetic reaction is composed of two sequential steps, AdoMet formation and the subsequent tripolyphosphate hydrolysis which occurs prior to release of AdoMet from the enzyme. The protein is S-adenosylmethionine synthase of Rhodococcus opacus (strain B4).